Consider the following 66-residue polypeptide: uncharacterized protein (66 aa).

The HTH cro/C1-type domain occupies 5–59; that stretch reads VKELRARFGYSQEKLGETVGVTRQTVAAIEKGDYVPSLLLALKICKAFSMKMEDV. A DNA-binding region (H-T-H motif) is located at residues 16–35; it reads QEKLGETVGVTRQTVAAIEK.

This is an uncharacterized protein from Bacillus subtilis (strain 168).